Consider the following 79-residue polypeptide: Cyclin-dependent kinases regulatory subunit 2 (79 aa).

Belongs to the CKS family. In terms of assembly, forms a homohexamer that can probably bind six kinase subunits.

Its function is as follows. Binds to the catalytic subunit of the cyclin dependent kinases and is essential for their biological function. The chain is Cyclin-dependent kinases regulatory subunit 2 (cks2) from Xenopus laevis (African clawed frog).